Reading from the N-terminus, the 86-residue chain is Kappa-theraphotoxin-Cg1a 6 (86 aa).

Residues 1–21 (MKVSVLITLAVLGVMFVWASA) form the signal peptide. Positions 22-50 (AELEERGSDQRDSPAWLKSMERIFQSEER) are excised as a propeptide. 3 cysteine pairs are disulfide-bonded: Cys-52–Cys-66, Cys-59–Cys-71, and Cys-65–Cys-78. A Phenylalanine amide modification is found at Phe-84.

It belongs to the neurotoxin 10 (Hwtx-1) family. 28 (Jztx-11) subfamily. As to expression, expressed by the venom gland.

It localises to the secreted. Functionally, this toxin acts as a voltage-dependent gating-modifier. It inhibits the sodium conductance (IC(50)=124 nM) and slows the fast inactivation (EC(50)=1180 nM) of Nav1.5/SCN5A. It significantly shifts the activation to more depolarized voltages and decreases the deactivation of Nav1.5 currents upon extreme depolarization, but only slightly affects voltage-dependence of steady-state inactivation. In addition, this toxin causes an approximately five-fold decrease in the rate of recovery from inactivation and an approximately 1.9-fold reduction in the closed-state inactivation rate. This toxin integrates the functions of site 3 toxins (alpha-scorpion toxins) with site 4 toxins (beta-scorpion and spider toxins) by targeting multiple sites on Nav1.5. Also shows inhibition of voltage-gated potassium channels (5 uM completely inhibits Kv2.1/KCNB1, whereas 5 uM moderately inhibits Kv4.2/KCND2 Kv4.1/KCND1 channels). The polypeptide is Kappa-theraphotoxin-Cg1a 6 (Chilobrachys guangxiensis (Chinese earth tiger tarantula)).